The following is a 360-amino-acid chain: Photosystem II protein D1 (360 aa).

3 helical membrane passes run 29 to 46 (YIGW…AATA), 118 to 133 (HFLL…QWEL), and 142 to 156 (WICV…SATA). Histidine 118 is a chlorophyll a binding site. Tyrosine 126 is a pheophytin a binding site. Residues aspartate 170 and glutamate 189 each contribute to the [CaMn4O5] cluster site. The helical transmembrane segment at 197 to 218 (FHMLGVAGVFGGSLFSAMHGSL) threads the bilayer. A chlorophyll a-binding site is contributed by histidine 198. Residues histidine 215 and 264–265 (SF) contribute to the a quinone site. Residue histidine 215 coordinates Fe cation. Histidine 272 contacts Fe cation. The helical transmembrane segment at 274 to 288 (FLAAWPVVGIWFTAL) threads the bilayer. 4 residues coordinate [CaMn4O5] cluster: histidine 332, glutamate 333, aspartate 342, and alanine 344. A propeptide spanning residues 345–360 (AGEVAPVALTAPAING) is cleaved from the precursor.

This sequence belongs to the reaction center PufL/M/PsbA/D family. As to quaternary structure, PSII is composed of 1 copy each of membrane proteins PsbA, PsbB, PsbC, PsbD, PsbE, PsbF, PsbH, PsbI, PsbJ, PsbK, PsbL, PsbM, PsbT, PsbX, PsbY, PsbZ, Psb30/Ycf12, peripheral proteins PsbO, CyanoQ (PsbQ), PsbU, PsbV and a large number of cofactors. It forms dimeric complexes. The D1/D2 heterodimer binds P680, chlorophylls that are the primary electron donor of PSII, and subsequent electron acceptors. It shares a non-heme iron and each subunit binds pheophytin, quinone, additional chlorophylls, carotenoids and lipids. D1 provides most of the ligands for the Mn4-Ca-O5 cluster of the oxygen-evolving complex (OEC). There is also a Cl(-1) ion associated with D1 and D2, which is required for oxygen evolution. The PSII complex binds additional chlorophylls, carotenoids and specific lipids. is required as a cofactor. In terms of processing, tyr-161 forms a radical intermediate that is referred to as redox-active TyrZ, YZ or Y-Z. Post-translationally, C-terminally processed by CtpA; processing is essential to allow assembly of the oxygen-evolving complex and thus photosynthetic growth.

Its subcellular location is the cellular thylakoid membrane. It catalyses the reaction 2 a plastoquinone + 4 hnu + 2 H2O = 2 a plastoquinol + O2. In terms of biological role, photosystem II (PSII) is a light-driven water:plastoquinone oxidoreductase that uses light energy to abstract electrons from H(2)O, generating O(2) and a proton gradient subsequently used for ATP formation. It consists of a core antenna complex that captures photons, and an electron transfer chain that converts photonic excitation into a charge separation. The D1/D2 (PsbA/PsbD) reaction center heterodimer binds P680, the primary electron donor of PSII as well as several subsequent electron acceptors. The sequence is that of Photosystem II protein D1 from Microchaete diplosiphon (Fremyella diplosiphon).